A 103-amino-acid chain; its full sequence is Histone H4 (103 aa).

Residues 1–14 (MSGRGKGGKGLGKG) show a composition bias toward gly residues. Residues 1–20 (MSGRGKGGKGLGKGGAKRHR) are disordered. The DNA-binding element occupies 17–21 (KRHRK).

It belongs to the histone H4 family. In terms of assembly, the nucleosome is a histone octamer containing two molecules each of H2A, H2B, H3 and H4 assembled in one H3-H4 heterotetramer and two H2A-H2B heterodimers. The octamer wraps approximately 147 bp of DNA.

The protein localises to the nucleus. The protein resides in the chromosome. Core component of nucleosome. Nucleosomes wrap and compact DNA into chromatin, limiting DNA accessibility to the cellular machineries which require DNA as a template. Histones thereby play a central role in transcription regulation, DNA repair, DNA replication and chromosomal stability. DNA accessibility is regulated via a complex set of post-translational modifications of histones, also called histone code, and nucleosome remodeling. In Physarum polycephalum (Slime mold), this protein is Histone H4 (H41).